The chain runs to 692 residues: Elongation factor G (692 aa).

One can recognise a tr-type G domain in the interval Asn8–Thr283. GTP-binding positions include Ala17–Thr24, Asp81–His85, and Asn135–Asp138.

This sequence belongs to the TRAFAC class translation factor GTPase superfamily. Classic translation factor GTPase family. EF-G/EF-2 subfamily.

The protein resides in the cytoplasm. Its function is as follows. Catalyzes the GTP-dependent ribosomal translocation step during translation elongation. During this step, the ribosome changes from the pre-translocational (PRE) to the post-translocational (POST) state as the newly formed A-site-bound peptidyl-tRNA and P-site-bound deacylated tRNA move to the P and E sites, respectively. Catalyzes the coordinated movement of the two tRNA molecules, the mRNA and conformational changes in the ribosome. This chain is Elongation factor G (fusA), found in Helicobacter pylori (strain J99 / ATCC 700824) (Campylobacter pylori J99).